Reading from the N-terminus, the 361-residue chain is Oxidoreductase lepF (361 aa).

A helical transmembrane segment spans residues 257–277 (MLMLVLQAVLLPVFYVVAMPL).

Belongs to the NmrA-type oxidoreductase family.

The protein localises to the membrane. Functionally, oxidoreductase; part of the gene cluster 23 that mediates the biosynthesis of a family of 2-pyridones known as leporins. The hybrid PKS-NRPS synthetase lepA and the enoyl reductase lepG are responsible for fusion of phenylalanine with a hexaketide and subsequent release of the stable tetramic acid precursor, pre-leporin C. Because lepA lacks a designated enoylreductase (ER) domain, the required activity is provided the enoyl reductase lepG. It is possible that the dehydrogenase lepF also participates in production of pre-leporin C. Cytochrome P450 monooxygenase lepH is then required for the ring expansion step to yield leporin C. Leporin C is then presumably further oxidized by the N-hydroxylase lepD to form leporin B. LepI may possess a function in biosynthesis upstream of lepA. Leporin B is further oxidized in the presence of ferric ion to give the leporin B trimer-iron chelate, but whether or not this reaction is catalyzed by an enzyme in the pathway or by ferric ion is not determined yet. The chain is Oxidoreductase lepF from Aspergillus flavus (strain ATCC 200026 / FGSC A1120 / IAM 13836 / NRRL 3357 / JCM 12722 / SRRC 167).